We begin with the raw amino-acid sequence, 139 residues long: Protein Turandot B (139 aa).

Positions 1–21 (MNFKTALICFALLLIGTLCSA) are cleaved as a signal peptide.

This sequence belongs to the Turandot family.

The protein resides in the secreted. In terms of biological role, a humoral factor that may play a role in stress tolerance. In Drosophila sechellia (Fruit fly), this protein is Protein Turandot B.